The chain runs to 59 residues: Protein translocase subunit SecE (59 aa).

Residues 37–57 (LIVLLFVGLLAFLVQLAFSIL) form a helical membrane-spanning segment.

It belongs to the SecE/SEC61-gamma family. Component of the Sec protein translocase complex. Heterotrimer consisting of SecY (alpha), SecG (beta) and SecE (gamma) subunits. The heterotrimers can form oligomers, although 1 heterotrimer is thought to be able to translocate proteins. Interacts with the ribosome. May interact with SecDF, and other proteins may be involved.

It localises to the cell membrane. Functionally, essential subunit of the Sec protein translocation channel SecYEG. Clamps together the 2 halves of SecY. May contact the channel plug during translocation. The protein is Protein translocase subunit SecE of Metallosphaera sedula (strain ATCC 51363 / DSM 5348 / JCM 9185 / NBRC 15509 / TH2).